Consider the following 961-residue polypeptide: Cytochrome b5-like reductase apf12 (961 aa).

FAD is bound at residue alanine 298. Residues alanine 429 to alanine 548 form the FAD-binding FR-type domain. NADP(+)-binding positions include serine 453 to glutamine 456, serine 499 to lysine 500, and glycine 753. Positions leucine 716–aspartate 793 constitute a Cytochrome b5 heme-binding domain. FAD is bound at residue glycine 753–glutamate 755.

It belongs to the flavoprotein pyridine nucleotide cytochrome reductase family. FAD serves as cofactor.

It participates in secondary metabolite biosynthesis. Functionally, cytochrome b5-like reductase; part of the gene cluster that mediates the biosynthesis of the cyclic tetrapeptide apicidin F (APF). The non-ribosomal peptide synthetase apf1 incorporates four different amino acids to produce apicidin F: L-phenylalanine, D-pipecolic acid (D-pip), N-methoxy-L-tryptophan and L-2-aminooctanedioic acid. L-Phenylalanine is the only proteinogenic amino acid directly used by apf1. The 3 other apf1 substrates are non-proteinogenic and have to be modified by other enzymes of the cluster. Lysine is converted to delta-1-pyrroline-5-carboxylate (P5C) which is reduced to L-pipecolic acid (L-pip) by apf3. L-pip is epimerized to D-pip, probably by apf1 activity, prior to incorporation. L-Tryptophan is N-oxidyzed by one of the cytochrome P450 monooxygenases (apf7 or apf8), and further methylated at the hydroxy group by the O-methyltransferase apf6 to yield N-methoxy-L-tryptophan. The synthesis of the fourth apf1 substrate is more complex. The fatty acid synthase apf5 is involved in the synthesis of the octanoic acid backbone of L-2-aminooctanedioic acid by fixing one acetyl-CoA unit and three malonyl-CoA units. Then one of the cytochrome P450 monooxygenases (apf7 or apf8) may oxidize this backbone to 2-oxooctanoic acid. The aminotransferase apf4 is predicted to catalyze the exchange of the keto group with an amino group. The next step would be the oxidation of 2-aminooctanoic acid by one of the cytochrome P450 monooxygenases (apf7 or apf8). The last step is the oxidation of 2-amino-8-hydroxyoctanoic acid to 2-aminooctanedioic acid is catalyzed by the FAD-dependent monooxygenase apf9. The polypeptide is Cytochrome b5-like reductase apf12 (Gibberella fujikuroi (strain CBS 195.34 / IMI 58289 / NRRL A-6831) (Bakanae and foot rot disease fungus)).